The chain runs to 61 residues: Large ribosomal subunit protein uL30 (61 aa).

This sequence belongs to the universal ribosomal protein uL30 family. Part of the 50S ribosomal subunit.

In Chlorobaculum tepidum (strain ATCC 49652 / DSM 12025 / NBRC 103806 / TLS) (Chlorobium tepidum), this protein is Large ribosomal subunit protein uL30.